The primary structure comprises 193 residues: MIVRLTSEHPDGARAARRLRARAAAFLAALGREDAELSILLVTDRRIRTLNREWRQKDQATDVLSFPISEPPGAGALLGDVVISLDTAARRARSDGRRVGAELDRYLAHGILHLLGYDHERPADARAMAEKEAELARAEGLVGAALREGRREGRAGEAKDRWTRSPTSISTPSRSGSTARGSRAKTSRAGSRT.

3 residues coordinate Zn(2+): H109, H113, and H119. Residues 143–193 (GAALREGRREGRAGEAKDRWTRSPTSISTPSRSGSTARGSRAKTSRAGSRT) are disordered. The span at 147-163 (REGRREGRAGEAKDRWT) shows a compositional bias: basic and acidic residues. Residues 164–181 (RSPTSISTPSRSGSTARG) are compositionally biased toward low complexity.

The protein belongs to the endoribonuclease YbeY family. Zn(2+) serves as cofactor.

It is found in the cytoplasm. Single strand-specific metallo-endoribonuclease involved in late-stage 70S ribosome quality control and in maturation of the 3' terminus of the 16S rRNA. The chain is Endoribonuclease YbeY from Anaeromyxobacter dehalogenans (strain 2CP-C).